The following is a 449-amino-acid chain: Delta(8)-fatty-acid desaturase 1 (449 aa).

Positions Lys-7–Ser-91 constitute a Cytochrome b5 heme-binding domain. Residues His-42 and His-65 each contribute to the heme site. A run of 2 helical transmembrane segments spans residues Val-113–Leu-133 and Val-138–Ile-158. The short motif at His-160–His-164 is the Histidine box-1 element. Residues Tyr-173–Trp-195 form a helical membrane-spanning segment. The Histidine box-2 signature appears at His-197–His-201. The next 3 membrane-spanning stretches (helical) occupy residues Tyr-255–Phe-275, Ala-284–Leu-304, and Phe-311–Asn-331. The Histidine box-3 motif lies at Gln-374–His-378.

Belongs to the fatty acid desaturase type 1 family. Fe cation is required as a cofactor. Highly expressed in flowers. Expressed in roots, leaves, stems and siliques.

Its subcellular location is the endoplasmic reticulum membrane. The catalysed reaction is an N-acyl-(4R)-4-hydroxysphinganine + 2 Fe(II)-[cytochrome b5] + O2 + 2 H(+) = a (4R,8E)-4-hydroxysphingenine ceramide + 2 Fe(III)-[cytochrome b5] + 2 H2O. The enzyme catalyses an N-acyl-(4R)-4-hydroxysphinganine + 2 Fe(II)-[cytochrome b5] + O2 + 2 H(+) = a (4R,8Z)-4-hydroxysphing-8-enine ceramide + 2 Fe(III)-[cytochrome b5] + 2 H2O. Its function is as follows. Plays a major role as delta(8)-fatty-acid desaturase which introduces a double bond at the 8-position in the long-chain base (LCB) of ceramides with or without a hydroxy group at the 4-position. The enzyme produces both the 8E and 8Z isomers (in a 4:1 ratio). This structural modification contributes to the quantitative partitioning of ceramides between the two major sphingolipid classes, glucosylceramides and glycosylinositolphosphoryl ceramides. Sphingolipids are important membrane components involved in environmental stress responses, such as resistance to chilling, and act as cell signaling molecules. The chain is Delta(8)-fatty-acid desaturase 1 (SLD1) from Arabidopsis thaliana (Mouse-ear cress).